A 152-amino-acid chain; its full sequence is UPF0266 membrane protein KPK_1957 (152 aa).

3 consecutive transmembrane segments (helical) span residues 6 to 26 (LVIILFILALLAYAVYDQFIM), 45 to 65 (VDGLIFVGLTAILIYNNITQH), and 67 to 87 (TPITTWLLSALALMGLYLFWI).

It belongs to the UPF0266 family.

The protein localises to the cell inner membrane. The polypeptide is UPF0266 membrane protein KPK_1957 (Klebsiella pneumoniae (strain 342)).